The primary structure comprises 190 residues: Ladderlectin (190 aa).

The N-terminal stretch at 1-18 (MAMLTISLLLCAAVALNG) is a signal peptide. The C-type lectin domain occupies 60 to 179 (GSRCFMFVET…GNSFPSGVLQ (120 aa)). Cysteines 153 and 169 form a disulfide.

In terms of assembly, multimeric. In terms of tissue distribution, expressed in cells of the branchial epithelium, hepatic sinusoids, biliary epithelium, renal interstitium, skin, and sub-mucosal granular layer of the intestine. Highly expressed in caudal kidney. Moderately expressed in liver. Weakly expressed in gill, spleen, cranial kidney and skin. Isoform 1 is highly expressed in intestine. Isoform 2 is weakly expressed in intestine.

In terms of biological role, lectin that binds sepharose in a calcium-dependent manner. The polypeptide is Ladderlectin (Oncorhynchus mykiss (Rainbow trout)).